Here is a 353-residue protein sequence, read N- to C-terminus: Photosystem II protein D1 (353 aa).

Thr2 is modified (N-acetylthreonine). Phosphothreonine is present on Thr2. A run of 3 helical transmembrane segments spans residues 29–46, 118–133, and 142–156; these read YIGW…TATS, HFLL…EWEL, and WIAV…AATA. His118 is a chlorophyll a binding site. Tyr126 is a pheophytin a binding site. [CaMn4O5] cluster is bound by residues Asp170 and Glu189. A helical transmembrane segment spans residues 197–218; it reads FHMLGVAGVFGGSLFSAMHGSL. His198 is a chlorophyll a binding site. Residues His215 and 264 to 265 contribute to the a quinone site; that span reads SF. His215 is a Fe cation binding site. His272 serves as a coordination point for Fe cation. A helical transmembrane segment spans residues 274–288; the sequence is FLAAWPVVGIWFTAL. [CaMn4O5] cluster is bound by residues His332, Glu333, Asp342, and Ala344. The propeptide occupies 345–353; it reads AVEAPSTNG.

It belongs to the reaction center PufL/M/PsbA/D family. PSII is composed of 1 copy each of membrane proteins PsbA, PsbB, PsbC, PsbD, PsbE, PsbF, PsbH, PsbI, PsbJ, PsbK, PsbL, PsbM, PsbT, PsbX, PsbY, PsbZ, Psb30/Ycf12, at least 3 peripheral proteins of the oxygen-evolving complex and a large number of cofactors. It forms dimeric complexes. It depends on The D1/D2 heterodimer binds P680, chlorophylls that are the primary electron donor of PSII, and subsequent electron acceptors. It shares a non-heme iron and each subunit binds pheophytin, quinone, additional chlorophylls, carotenoids and lipids. D1 provides most of the ligands for the Mn4-Ca-O5 cluster of the oxygen-evolving complex (OEC). There is also a Cl(-1) ion associated with D1 and D2, which is required for oxygen evolution. The PSII complex binds additional chlorophylls, carotenoids and specific lipids. as a cofactor. Post-translationally, tyr-161 forms a radical intermediate that is referred to as redox-active TyrZ, YZ or Y-Z. In terms of processing, C-terminally processed by CTPA; processing is essential to allow assembly of the oxygen-evolving complex and thus photosynthetic growth.

The protein resides in the plastid. It is found in the chloroplast thylakoid membrane. It carries out the reaction 2 a plastoquinone + 4 hnu + 2 H2O = 2 a plastoquinol + O2. Functionally, photosystem II (PSII) is a light-driven water:plastoquinone oxidoreductase that uses light energy to abstract electrons from H(2)O, generating O(2) and a proton gradient subsequently used for ATP formation. It consists of a core antenna complex that captures photons, and an electron transfer chain that converts photonic excitation into a charge separation. The D1/D2 (PsbA/PsbD) reaction center heterodimer binds P680, the primary electron donor of PSII as well as several subsequent electron acceptors. This is Photosystem II protein D1 from Drimys granadensis.